The following is a 104-amino-acid chain: Ribonuclease P protein component 4 (104 aa).

Residues Cys-57, Cys-60, Cys-83, and Cys-86 each contribute to the Zn(2+) site.

The protein belongs to the eukaryotic/archaeal RNase P protein component 4 family. In terms of assembly, consists of a catalytic RNA component and at least 4-5 protein subunits. Zn(2+) serves as cofactor.

Its subcellular location is the cytoplasm. The catalysed reaction is Endonucleolytic cleavage of RNA, removing 5'-extranucleotides from tRNA precursor.. Its function is as follows. Part of ribonuclease P, a protein complex that generates mature tRNA molecules by cleaving their 5'-ends. The polypeptide is Ribonuclease P protein component 4 (Saccharolobus islandicus (strain M.16.27) (Sulfolobus islandicus)).